Consider the following 151-residue polypeptide: Chemokine-like factor (151 aa).

The MARVEL domain maps to 13 to 133 (FCLSLKCFVK…DCALMCQKLR (121 aa)). A run of 4 helical transmembrane segments spans residues 19–39 (CFVKTLRLVVTVASMIFFIVA), 45–65 (YIVITGFEVTIILFLIALYMC), 74–94 (FFWPLLDVINSVVTTLFMLIV), and 107–127 (IMVGGVFGFLTVICTVADCAL). The N-linked (GlcNAc...) asparagine glycan is linked to asparagine 142.

Belongs to the chemokine-like factor family. Both isoforms have highest expression levels in testis with relatively lower expression level in liver, spleen, lung, brain and heart and barely detectable levels in skeletal muscle and kidney were barely detected. In most tissues, isoform CKLF2 has higher expression levels than isoform CKLF1.

It is found in the secreted. Its subcellular location is the membrane. In terms of biological role, may play an important role in inflammation and regeneration of skeletal muscle. Essential for embryonic development. Has chemotactic response in monocytes, neutrophils and lymphocytes. Binds CCR4. This is Chemokine-like factor (Cklf) from Rattus norvegicus (Rat).